The chain runs to 324 residues: Beta-ketoacyl-[acyl-carrier-protein] synthase III (324 aa).

Catalysis depends on residues C112 and H249. Positions 250–254 (QANRR) are ACP-binding. N279 is a catalytic residue.

The protein belongs to the thiolase-like superfamily. FabH family. Homodimer.

The protein localises to the cytoplasm. The enzyme catalyses malonyl-[ACP] + acetyl-CoA + H(+) = 3-oxobutanoyl-[ACP] + CO2 + CoA. It participates in lipid metabolism; fatty acid biosynthesis. Functionally, catalyzes the condensation reaction of fatty acid synthesis by the addition to an acyl acceptor of two carbons from malonyl-ACP. Catalyzes the first condensation reaction which initiates fatty acid synthesis and may therefore play a role in governing the total rate of fatty acid production. Possesses both acetoacetyl-ACP synthase and acetyl transacylase activities. Its substrate specificity determines the biosynthesis of branched-chain and/or straight-chain of fatty acids. This is Beta-ketoacyl-[acyl-carrier-protein] synthase III from Streptococcus pyogenes serotype M4 (strain MGAS10750).